A 252-amino-acid chain; its full sequence is MKIVISPAKSLNFEKELPTSQYTEPSFLKEARVVHKVVKTKKPSELSELMSISDKLADLNWKRNQDWKTPFTPENARPAVYTFDGDVYTGLDAYSIPLEKLDALQDKLRILSGLYGLLKPLDLMQAYRLEMGTKMPVGESKNLHEFWKPTVTKALNKELKKDELFVNLASNEYFSAVDVKALKVPVITPDFKDYKDGKLKMISFFAKKARGMMVRYIIDTNAETIDDLKGFNYEGYKFDANLSKGNHLVFTR.

It belongs to the UPF0246 family.

The chain is UPF0246 protein Fjoh_4905 from Flavobacterium johnsoniae (strain ATCC 17061 / DSM 2064 / JCM 8514 / BCRC 14874 / CCUG 350202 / NBRC 14942 / NCIMB 11054 / UW101) (Cytophaga johnsonae).